The primary structure comprises 289 residues: ATP synthase gamma chain (289 aa).

It belongs to the ATPase gamma chain family. As to quaternary structure, F-type ATPases have 2 components, CF(1) - the catalytic core - and CF(0) - the membrane proton channel. CF(1) has five subunits: alpha(3), beta(3), gamma(1), delta(1), epsilon(1). CF(0) has three main subunits: a, b and c.

The protein resides in the cell membrane. Produces ATP from ADP in the presence of a proton gradient across the membrane. The gamma chain is believed to be important in regulating ATPase activity and the flow of protons through the CF(0) complex. The sequence is that of ATP synthase gamma chain from Lactococcus lactis subsp. lactis (strain IL1403) (Streptococcus lactis).